The sequence spans 416 residues: Alpha-1-antiproteinase (416 aa).

The N-terminal stretch at 1-24 (MALSITRGLLLLAALCCLAPTSLA) is a signal peptide. N-linked (GlcNAc...) asparagine glycans are attached at residues N68, N105, N143, and N269. The segment at 371 to 390 (GATFLEAIPMSLPPDVEFNR) is RCL. Residue S381 is modified to Phosphoserine.

The protein belongs to the serpin family. As to quaternary structure, interacts with CELA2A. Interacts with ERGIC3 and LMAN1/ERGIC53. Interacts with PRSS1/Trypsin. In terms of tissue distribution, plasma.

The protein localises to the secreted. Inhibits human leukocyte elastase, pig pancreatic elastase and bovine trypsin on a 1:1 molar basis. This Ovis aries (Sheep) protein is Alpha-1-antiproteinase.